The following is a 602-amino-acid chain: tRNA uridine 5-carboxymethylaminomethyl modification enzyme MnmG (602 aa).

Residue 10–15 (GGGHAG) coordinates FAD. Positions 217 to 242 (DPQPRGFTGRPGPRAAESPTWQTHTT) are disordered. Residue 267–281 (GPRYCPSIEDKVVRF) participates in NAD(+) binding.

The protein belongs to the MnmG family. Homodimer. Heterotetramer of two MnmE and two MnmG subunits. The cofactor is FAD.

Its subcellular location is the cytoplasm. Its function is as follows. NAD-binding protein involved in the addition of a carboxymethylaminomethyl (cmnm) group at the wobble position (U34) of certain tRNAs, forming tRNA-cmnm(5)s(2)U34. This chain is tRNA uridine 5-carboxymethylaminomethyl modification enzyme MnmG, found in Deinococcus geothermalis (strain DSM 11300 / CIP 105573 / AG-3a).